We begin with the raw amino-acid sequence, 198 residues long: Pyridoxal 5'-phosphate synthase subunit PdxT (198 aa).

49-51 (GES) provides a ligand contact to L-glutamine. The Nucleophile role is filled by cysteine 81. Residues arginine 113 and 141–142 (IR) contribute to the L-glutamine site. Catalysis depends on charge relay system residues histidine 177 and glutamate 179.

Belongs to the glutaminase PdxT/SNO family. In terms of assembly, in the presence of PdxS, forms a dodecamer of heterodimers. Only shows activity in the heterodimer.

It carries out the reaction aldehydo-D-ribose 5-phosphate + D-glyceraldehyde 3-phosphate + L-glutamine = pyridoxal 5'-phosphate + L-glutamate + phosphate + 3 H2O + H(+). The catalysed reaction is L-glutamine + H2O = L-glutamate + NH4(+). It participates in cofactor biosynthesis; pyridoxal 5'-phosphate biosynthesis. Functionally, catalyzes the hydrolysis of glutamine to glutamate and ammonia as part of the biosynthesis of pyridoxal 5'-phosphate. The resulting ammonia molecule is channeled to the active site of PdxS. This chain is Pyridoxal 5'-phosphate synthase subunit PdxT, found in Mycobacterium ulcerans (strain Agy99).